The chain runs to 108 residues: MNDMTNIMKKAKEMQQKMQQIQDEMVNLKVTGTAGGGLVSITLNGQNIISEVKIDPSLIKPEESEILEDLIMAAHNEAKEKISTAMAEKTQNITAGLPIPPGFKLPFS.

Belongs to the YbaB/EbfC family. As to quaternary structure, homodimer.

Its subcellular location is the cytoplasm. It localises to the nucleoid. Binds to DNA and alters its conformation. May be involved in regulation of gene expression, nucleoid organization and DNA protection. In Bartonella bacilliformis (strain ATCC 35685 / KC583 / Herrer 020/F12,63), this protein is Nucleoid-associated protein BARBAKC583_1239.